Here is a 294-residue protein sequence, read N- to C-terminus: Ribosomal RNA small subunit methyltransferase H (294 aa).

Residues 40 to 42 (GGH), D59, F86, D102, and Q109 contribute to the S-adenosyl-L-methionine site.

This sequence belongs to the methyltransferase superfamily. RsmH family.

It localises to the cytoplasm. The catalysed reaction is cytidine(1402) in 16S rRNA + S-adenosyl-L-methionine = N(4)-methylcytidine(1402) in 16S rRNA + S-adenosyl-L-homocysteine + H(+). Specifically methylates the N4 position of cytidine in position 1402 (C1402) of 16S rRNA. The chain is Ribosomal RNA small subunit methyltransferase H from Cyanothece sp. (strain PCC 7425 / ATCC 29141).